Here is a 154-residue protein sequence, read N- to C-terminus: MKLLVLCIFAMMATLAMSRRWHYVPPKFLNKAFEVALKVQIIAGFDRTLVKWLRTHGGTLSHVQKKALYFVNRRYMQTHWANYMLWINKKTDALGRTPVVGDYTRLGAEIGRRIDMDYFYNFLKGRNMIPKYLPYMEEINRMRSADIPVKYMGK.

The signal sequence occupies residues 1–18; the sequence is MKLLVLCIFAMMATLAMS.

In terms of assembly, homodimer. Sperm.

In terms of biological role, dissolves the egg vitelline layer nonenzymatically during fertilization. It creates a hole of about 3 mu-m in diameter through which the sperm pass. This is Egg-lysin from Haliotis sorenseni (White abalone).